Consider the following 259-residue polypeptide: Imidazole glycerol phosphate synthase subunit HisF (259 aa).

Residues Asp11 and Asp130 contribute to the active site.

Belongs to the HisA/HisF family. Heterodimer of HisH and HisF.

Its subcellular location is the cytoplasm. The enzyme catalyses 5-[(5-phospho-1-deoxy-D-ribulos-1-ylimino)methylamino]-1-(5-phospho-beta-D-ribosyl)imidazole-4-carboxamide + L-glutamine = D-erythro-1-(imidazol-4-yl)glycerol 3-phosphate + 5-amino-1-(5-phospho-beta-D-ribosyl)imidazole-4-carboxamide + L-glutamate + H(+). It functions in the pathway amino-acid biosynthesis; L-histidine biosynthesis; L-histidine from 5-phospho-alpha-D-ribose 1-diphosphate: step 5/9. In terms of biological role, IGPS catalyzes the conversion of PRFAR and glutamine to IGP, AICAR and glutamate. The HisF subunit catalyzes the cyclization activity that produces IGP and AICAR from PRFAR using the ammonia provided by the HisH subunit. In Shewanella amazonensis (strain ATCC BAA-1098 / SB2B), this protein is Imidazole glycerol phosphate synthase subunit HisF.